The sequence spans 104 residues: L-rhamnose mutarotase (104 aa).

A substrate-binding site is contributed by Y18. Residue H22 is the Proton donor of the active site. Residues Y41 and 76–77 (WW) contribute to the substrate site.

This sequence belongs to the rhamnose mutarotase family. Homodimer.

The protein localises to the cytoplasm. It catalyses the reaction alpha-L-rhamnose = beta-L-rhamnose. Its pathway is carbohydrate metabolism; L-rhamnose metabolism. Its function is as follows. Involved in the anomeric conversion of L-rhamnose. This Salmonella newport (strain SL254) protein is L-rhamnose mutarotase.